The primary structure comprises 264 residues: Propanediol uptake facilitator PduF (264 aa).

Helical transmembrane passes span 10 to 30 (GAEFLGTGLFLFFGIGCLSAL) and 42 to 62 (ICIIWGLGISLAVYLTAGISG). The NPA 1 signature appears at 66 to 68 (NPA). The next 3 helical transmembrane spans lie at 84 to 104 (VLPYIIAQFAGAFGGALLAYV), 143 to 163 (VWQAALVEVVITSILMGMIMA), and 179 to 199 (LLIGILVAVIGASTGPLTGFA). Positions 201-203 (NPA) match the NPA 2 motif. Residues 228 to 248 (IPYFIVPIVAPVIGACAGAAI) traverse the membrane as a helical segment.

It belongs to the MIP/aquaporin (TC 1.A.8) family.

The protein resides in the cell inner membrane. Functionally, probably facilitates diffusion of 1,2-propanediol (1,2-PD) into the cell. Modeling suggests active transport of 1,2-PD is required at low extracellular concentrations to allow maximal growth and saturation of PduP/PduQ within the bacterial microcompartment (BMC); this protein may be the cellular transporter. The 1,2-PD-specific bacterial microcompartment (BMC) concentrates low levels of 1,2-PD catabolic enzymes, concentrates volatile reaction intermediates thus enhancing pathway flux and keeps the level of toxic, mutagenic propionaldehyde low. The chain is Propanediol uptake facilitator PduF from Salmonella typhimurium (strain LT2 / SGSC1412 / ATCC 700720).